We begin with the raw amino-acid sequence, 468 residues long: MSPTGFTRAAAAPPPTLSRHAADTARLAAPLAIAQLSQMAMSVTDTVLLGSLGPDALAAGGLGANLFFVVVTLLQGVLTSVSVSVAHARGAMAEDRVPHIYWTGFALSLLLAVPAFALLSFAQPLLLAFGEPAALARNVGEYAAVLRFAAPGSLIGVGLMRSFLPAIGAAKRLLWVSLAGVGVNAFLNYGLIHGAFGLPRLGFLGSATATTITIWLTAITLVALLHGRSTFRHFVAATRPRLPLMGELFGIGWPVAITYGVESTLFLATGLTVGVLGESSLAAHQIALNVASVAFMVPLAIGQAANVRVGYWAGAGAPVAARHAGFVALGLGVAFMSLSGLVLIVAPHAIVGLYLKLDDPANARTVVLATSLLGIAAVFQIVDGMQTVGSGCLRGLKDTRVPMLAATLGYWGIGFPTGYWFAFHAGLGARGLWWGLAAGLASVAMLMTWRFHRKSAALGVRADARGQA.

11 helical membrane passes run 57-79 (LAAG…GVLT), 100-122 (IYWT…LSFA), 142-164 (YAAV…RSFL), 173-195 (LLWV…IHGA), 205-227 (GSAT…LLHG), 248-270 (LFGI…LATG), 280-302 (SLAA…LAIG), 323-345 (HAGF…VLIV), 360-382 (PANA…FQIV), 401-423 (VPML…WFAF), and 433-452 (WWGL…WRFH).

Belongs to the multi antimicrobial extrusion (MATE) (TC 2.A.66.1) family.

Its subcellular location is the cell inner membrane. Multidrug efflux pump. The chain is Probable multidrug resistance protein NorM (norM) from Burkholderia mallei (strain ATCC 23344).